The sequence spans 250 residues: 26 kDa periplasmic immunogenic protein (250 aa).

The N-terminal stretch at 1–28 is a signal peptide; the sequence is MNTRASNFLAASFSTIMLVGAFSLPAFA.

Its subcellular location is the periplasm. The protein is 26 kDa periplasmic immunogenic protein (bp26) of Brucella melitensis biotype 1 (strain ATCC 23456 / CCUG 17765 / NCTC 10094 / 16M).